A 310-amino-acid polypeptide reads, in one-letter code: Olfactory receptor 5H14 (310 aa).

At 1-28 the chain is on the extracellular side; that stretch reads MEEENATLLTEFVLTGFLYQPQWKIPLF. The N-linked (GlcNAc...) asparagine glycan is linked to Asn5. The chain crosses the membrane as a helical span at residues 29–49; sequence LAFLVIYLITIMGNLGLIAVI. At 50–56 the chain is on the cytoplasmic side; that stretch reads WKDPHLH. The helical transmembrane segment at 57-77 threads the bilayer; it reads IPMYLLLGNLAFVDALLSSSV. Topologically, residues 78–98 are extracellular; that stretch reads TLKMLINFLAKSKMISLSECK. A disulfide bridge connects residues Cys97 and Cys179. Residues 99 to 119 form a helical membrane-spanning segment; it reads IQLFSFAISVTTECFLLATMA. Topologically, residues 120-143 are cytoplasmic; that stretch reads YDRYVAICKPLLYPAIMTNGLCIR. A helical membrane pass occupies residues 144 to 164; that stretch reads LLILSYVGGLLHALIHEGFLF. At 165-195 the chain is on the extracellular side; sequence RLTFCNSNIIQHFYCDIIPLLKISYTDSSIN. The helical transmembrane segment at 196 to 216 threads the bilayer; the sequence is FLMVFIFAGSIQVFTIGTVLI. The Cytoplasmic segment spans residues 217-240; that stretch reads SYIFVLYTILKKKSVKGMRKAFST. The chain crosses the membrane as a helical span at residues 241–261; sequence CGAHLLSVSLYYGPLAFMYMG. At 262-271 the chain is on the extracellular side; that stretch reads SASPQADDQD. Residues 272-292 form a helical membrane-spanning segment; sequence MMESLFYTVIVPLLNPMIYSL. Topologically, residues 293–310 are cytoplasmic; the sequence is RNKQVIASFTKMFKRNDV.

This sequence belongs to the G-protein coupled receptor 1 family.

Its subcellular location is the cell membrane. Odorant receptor. In Homo sapiens (Human), this protein is Olfactory receptor 5H14 (OR5H14).